The following is a 207-amino-acid chain: dITP/XTP pyrophosphatase (207 aa).

11-16 (TGNPGK) is a binding site for substrate. Residue Asp72 is the Proton acceptor of the active site. Position 72 (Asp72) interacts with Mg(2+). Residues Ser73, 154-157 (FGYD), Lys177, and 182-183 (HR) each bind substrate.

This sequence belongs to the HAM1 NTPase family. In terms of assembly, homodimer. Mg(2+) is required as a cofactor.

The enzyme catalyses XTP + H2O = XMP + diphosphate + H(+). The catalysed reaction is dITP + H2O = dIMP + diphosphate + H(+). It carries out the reaction ITP + H2O = IMP + diphosphate + H(+). Its function is as follows. Pyrophosphatase that catalyzes the hydrolysis of nucleoside triphosphates to their monophosphate derivatives, with a high preference for the non-canonical purine nucleotides XTP (xanthosine triphosphate), dITP (deoxyinosine triphosphate) and ITP. Seems to function as a house-cleaning enzyme that removes non-canonical purine nucleotides from the nucleotide pool, thus preventing their incorporation into DNA/RNA and avoiding chromosomal lesions. The chain is dITP/XTP pyrophosphatase from Thermus thermophilus (strain ATCC 27634 / DSM 579 / HB8).